The following is a 205-amino-acid chain: Pyrrolidone-carboxylate peptidase (205 aa).

Residues Glu-78, Cys-141, and His-165 contribute to the active site.

It belongs to the peptidase C15 family. As to quaternary structure, homotetramer.

It localises to the cytoplasm. It catalyses the reaction Release of an N-terminal pyroglutamyl group from a polypeptide, the second amino acid generally not being Pro.. Removes 5-oxoproline from various penultimate amino acid residues except L-proline. In Thermosipho africanus (strain TCF52B), this protein is Pyrrolidone-carboxylate peptidase.